Reading from the N-terminus, the 528-residue chain is MTDACCLKGNEDKMVPRFGHGTWIGKAFNDTPEMLHERSLRQEKRLERANELMNDDSLQKLETAAMARSRSVDSAPLGNYTIWKNEYRRGKSFEDMLRLMQDQIIMARVYSGLAKFTNNLALHQEIETQLMKLAWEEESTDIDQEQRVLDSIRDMGQILARAHEQLYECKLVTNKLRAMLQTVEDELENEQTYITFLTQLASKALPDAIHCLTMRLNLEYHLLPLPMRNFPRRENLENPKLYHYALFSDNVLAASVVVNSTVMNAQDPSRHVFHLVTDKLNFGAMSMWFLLNPPGEATIHVQRFEDFTWLNSSYSPVLSQLESAAMKKFYFKTARSESVESGSENLKYRYPKYMSMLNHLRFYIPRIFPKLEKILFVDDDVVVQKDLTPLWSIDLKGKVNENFDPKFCGWAYGMNIFDLKEWKKNNITETYHFWQNLNENRTLWKLGTLPPGLITFYNLTQPLQRKWHLLGLGYDKGIDVKKIERSAVIHYNGHMKPWTEMGISKYQPYWTKYTNFDHPYIFTCRLFE.

It belongs to the glycosyltransferase 8 family.

It functions in the pathway glycan metabolism; pectin biosynthesis. Functionally, may be involved in pectin and/or xylans biosynthesis in cell walls. In Arabidopsis thaliana (Mouse-ear cress), this protein is Putative galacturonosyltransferase 2 (GAUT2).